A 114-amino-acid polypeptide reads, in one-letter code: SCP2 domain-containing protein YusD (114 aa).

Residues 21 to 101 form the SCP2 domain; sequence NASTLLITFQ…RALLKLEAIL (81 aa).

The sequence is that of SCP2 domain-containing protein YusD (yusD) from Bacillus subtilis (strain 168).